Reading from the N-terminus, the 162-residue chain is Protein archease (162 aa).

Positions 34, 161, and 162 each coordinate Ca(2+).

This sequence belongs to the archease family. As to quaternary structure, component of the tRNA-splicing ligase complex.

In terms of biological role, component of the tRNA-splicing ligase complex required to facilitate the enzymatic turnover of catalytic subunit RTCB. Together with ddx1, acts by facilitating the guanylylation of RTCB, a key intermediate step in tRNA ligation. In Danio rerio (Zebrafish), this protein is Protein archease (zbtb8os).